Here is a 522-residue protein sequence, read N- to C-terminus: Transcription factor SPT20 homolog (522 aa).

The residue at position 284 (S284) is a Phosphoserine. Disordered stretches follow at residues 361–380 and 408–522; these read DEESDSQMSPSHSSTDDHSN and PVKM…RHES. A compositionally biased stretch (low complexity) spans 412–425; sequence SHSSSGSASLSQVS. The span at 433–442 shows a compositional bias: polar residues; the sequence is TETVSVQSSV. Over residues 458–467 the composition is skewed to low complexity; it reads SSSGNSSSGN. Over residues 481 to 492 the composition is skewed to pro residues; that stretch reads PTPPPSSKPPTI. Phosphothreonine is present on T482. Residues 506-522 show a composition bias toward low complexity; it reads LSPAALSPASSSQRHES. S507 and S512 each carry phosphoserine.

Belongs to the SPT20 family. As to quaternary structure, interacts with ATG9A. Interacts with MAPK14.

In terms of biological role, required for MAP kinase p38 (MAPK11, MAPK12, MAPK13 and/or MAPK14) activation during gastrulation. Required for down-regulation of E-cadherin during gastrulation by regulating E-cadherin protein level downstream from NCK-interacting kinase (NIK) and independently of the regulation of transcription by FGF signaling and Snail. Required for starvation-induced ATG9A trafficking during autophagy. The sequence is that of Transcription factor SPT20 homolog (SUPT20H) from Pongo abelii (Sumatran orangutan).